Consider the following 336-residue polypeptide: Vacuolar protein sorting-associated protein 26B (336 aa).

Phosphoserine occurs at positions 302, 304, and 319.

It belongs to the VPS26 family. Component of the heterotrimeric retromer cargo-selective complex (CSC), also described as vacuolar protein sorting VPS subcomplex (VPS,) formed by VPS26 (VPS26A or VPS26B), VPS29 and VPS35. The CSC has a highly elongated structure with VPS26 and VPS29 binding independently at opposite distal ends of VPS35 as central platform. The CSC is believed to associate with variable sorting nexins to form functionally distinct retromer complex variants. The originally described retromer complex (also called SNX-BAR retromer) is a pentamer containing the CSC and a heterodimeric membrane-deforming subcomplex formed between SNX1 or SNX2 and SNX5 or SNX6 (also called SNX-BAR subcomplex); the respective CSC and SNX-BAR subcomplexes associate with low affinity. The CSC associates with SNX3 to form a SNX3-retromer complex. The CSC associates with SNX27, the WASH complex and the SNX-BAR subcomplex to form the SNX27-retromer complex. Interacts with VPS29, VPS35, TBC1D5, GOLPH3, SNX27.

It is found in the cytoplasm. It localises to the membrane. The protein localises to the early endosome. The protein resides in the late endosome. Its function is as follows. Acts as a component of the retromer cargo-selective complex (CSC). The CSC is believed to be the core functional component of retromer or respective retromer complex variants acting to prevent missorting of selected transmembrane cargo proteins into the lysosomal degradation pathway. The recruitment of the CSC to the endosomal membrane involves RAB7A and SNX3. The SNX-BAR retromer mediates retrograde transport of cargo proteins from endosomes to the trans-Golgi network (TGN) and is involved in endosome-to-plasma membrane transport for cargo protein recycling. The SNX3-retromer mediates the retrograde transport of WLS distinct from the SNX-BAR retromer pathway. The SNX27-retromer is believed to be involved in endosome-to-plasma membrane trafficking and recycling of a broad spectrum of cargo proteins. The CSC seems to act as recruitment hub for other proteins, such as the WASH complex and TBC1D5. May be involved in retrograde transport of SORT1 but not of IGF2R. Acts redundantly with VSP26A in SNX-27 mediated endocytic recycling of SLC2A1/GLUT1. The polypeptide is Vacuolar protein sorting-associated protein 26B (VPS26B) (Homo sapiens (Human)).